The chain runs to 416 residues: 3-hydroxy-3-methylglutaryl coenzyme A reductase AN1593 (416 aa).

E103 functions as the Charge relay system in the catalytic mechanism. N167 carries an N-linked (GlcNAc...) asparagine glycan. K236 serves as the catalytic Charge relay system. N277 carries an N-linked (GlcNAc...) asparagine glycan. The active-site Charge relay system is the D312. A helical transmembrane segment spans residues 380 to 400; the sequence is LALLVAAGVLAGELSLCSALS. H408 acts as the Proton donor in catalysis.

This sequence belongs to the HMG-CoA reductase family.

Its subcellular location is the membrane. It carries out the reaction (R)-mevalonate + 2 NADP(+) + CoA = (3S)-3-hydroxy-3-methylglutaryl-CoA + 2 NADPH + 2 H(+). It participates in metabolic intermediate biosynthesis; (R)-mevalonate biosynthesis; (R)-mevalonate from acetyl-CoA: step 3/3. 3-hydroxy-3-methylglutaryl coenzyme A reductase; part of the gene cluster that mediates the biosynthesis of the diterpene ent-pimara-8(14),15-diene (PD). Within the cluster, the HMG-CoA reductase AN1593 functions in the mevalonate pathway, which produces isoprenoid precursors. The geranylgeranyl pyrophosphate (GGPP) synthase AN1592 is needed in the formation of GGPP, the precursor for diterpenes. Lastly, the pimaradiene synthase pbcA performs the 2 cyclization steps that convert GGPP to ent-pimara-8(14),15-diene. The putative roles of the remaining cluster enzymes in ent-pimara-8(14),15-diene biosynthesis is unclear. The cytochrome P450 monooxygenase AN1598, the glutathione S-transferase AN1595, the oxidoreductases AN1596 and AN1597 probably function as decorative enzymes. It is possible that in biological conditions the compound is oxidized to ent-pimara-8(14),15-dien-19-oic acid, which is a bioactive diterpene compound predominant in many plant extracts. The polypeptide is 3-hydroxy-3-methylglutaryl coenzyme A reductase AN1593 (Emericella nidulans (strain FGSC A4 / ATCC 38163 / CBS 112.46 / NRRL 194 / M139) (Aspergillus nidulans)).